The following is a 502-amino-acid chain: Mannitol 2-dehydrogenase (502 aa).

37 to 48 (IVHVGVGGFHRA) is a binding site for NAD(+).

The protein belongs to the mannitol dehydrogenase family. As to quaternary structure, monomer.

The catalysed reaction is D-mannitol + NAD(+) = D-fructose + NADH + H(+). Functionally, catalyzes the NAD(H)-dependent interconversion of D-fructose and D-mannitol in the mannitol metabolic pathway. The chain is Mannitol 2-dehydrogenase from Aspergillus oryzae (strain ATCC 42149 / RIB 40) (Yellow koji mold).